Consider the following 408-residue polypeptide: Aminoacylase-1 (408 aa).

Histidine 80 lines the Zn(2+) pocket. The active site involves aspartate 82. A Zn(2+)-binding site is contributed by aspartate 113. Glutamate 147 functions as the Proton acceptor in the catalytic mechanism. Glutamate 148, glutamate 175, and histidine 373 together coordinate Zn(2+).

It belongs to the peptidase M20A family. In terms of assembly, homodimer. Interacts with SPHK1. The cofactor is Zn(2+).

The protein localises to the cytoplasm. It carries out the reaction an N-acyl-L-amino acid + H2O = an L-alpha-amino acid + a carboxylate. The enzyme catalyses N-acetyl-L-methionine + H2O = L-methionine + acetate. It catalyses the reaction N-acetyl-L-glutamine + H2O = L-glutamine + acetate. Functionally, catalyzes the hydrolysis of N-acetylated amino acids to acetate and free amino acids. The chain is Aminoacylase-1 (ACY1) from Pongo abelii (Sumatran orangutan).